Here is a 499-residue protein sequence, read N- to C-terminus: Trichoplein keratin filament-binding protein (499 aa).

The stretch at 12–38 (SRVRTLEQQLVRQREQEARLRRQWEQH) forms a coiled coil. 2 disordered regions span residues 46–78 (DVRS…EEKQ) and 169–209 (VQQQ…EEEN). The span at 50–67 (SKQAQWSSRQSFHRSMSA) shows a compositional bias: polar residues. Basic and acidic residues-rich tracts occupy residues 69-78 (QRDRMREEKQ) and 172-209 (QEKK…EEEN). Coiled-coil stretches lie at residues 71 to 133 (DRMR…ERRK), 168 to 306 (QVQQ…ALLE), and 359 to 484 (WEKR…MIRQ). Positions 74 to 499 (REEKQRKLEE…IHSRPRSAWT (426 aa)) are interaction with keratin proteins. Positions 260 to 426 (KMMEESRRKT…RLTLRLEKEQ (167 aa)) are trichohyalin/plectin homology domain.

This sequence belongs to the TCHP family.

It localises to the cytoplasm. The protein localises to the cytoskeleton. Its subcellular location is the microtubule organizing center. The protein resides in the centrosome. Its function is as follows. May act as a 'capping' or 'branching' protein for keratin filaments in the cell periphery. May regulate K8/K18 filament and desmosome organization mainly at the apical or peripheral regions of simple epithelial cells. This is Trichoplein keratin filament-binding protein from Danio rerio (Zebrafish).